The following is a 307-amino-acid chain: Elongation factor Ts (307 aa).

Positions 79–82 are involved in Mg(2+) ion dislocation from EF-Tu; that stretch reads TDFV.

It belongs to the EF-Ts family.

It localises to the cytoplasm. In terms of biological role, associates with the EF-Tu.GDP complex and induces the exchange of GDP to GTP. It remains bound to the aminoacyl-tRNA.EF-Tu.GTP complex up to the GTP hydrolysis stage on the ribosome. This Sinorhizobium fredii (strain NBRC 101917 / NGR234) protein is Elongation factor Ts.